Here is an 874-residue protein sequence, read N- to C-terminus: Probable inorganic carbon transporter subunit DabA (874 aa).

Residues C398, D400, H580, and C595 each contribute to the Zn(2+) site.

Belongs to the inorganic carbon transporter (TC 9.A.2) DabA family. As to quaternary structure, forms a complex with DabB. Zn(2+) serves as cofactor.

It localises to the cell membrane. In terms of biological role, part of an energy-coupled inorganic carbon pump. This Bacillus cereus (strain AH820) protein is Probable inorganic carbon transporter subunit DabA.